The sequence spans 80 residues: ATP synthase subunit c (80 aa).

2 helical membrane passes run 11–31 (MAAA…IGIL) and 53–73 (FFVV…LGLY).

It belongs to the ATPase C chain family. F-type ATPases have 2 components, F(1) - the catalytic core - and F(0) - the membrane proton channel. F(1) has five subunits: alpha(3), beta(3), gamma(1), delta(1), epsilon(1). F(0) has three main subunits: a(1), b(2) and c(10-14). The alpha and beta chains form an alternating ring which encloses part of the gamma chain. F(1) is attached to F(0) by a central stalk formed by the gamma and epsilon chains, while a peripheral stalk is formed by the delta and b chains.

The protein localises to the cell inner membrane. Its function is as follows. F(1)F(0) ATP synthase produces ATP from ADP in the presence of a proton or sodium gradient. F-type ATPases consist of two structural domains, F(1) containing the extramembraneous catalytic core and F(0) containing the membrane proton channel, linked together by a central stalk and a peripheral stalk. During catalysis, ATP synthesis in the catalytic domain of F(1) is coupled via a rotary mechanism of the central stalk subunits to proton translocation. In terms of biological role, key component of the F(0) channel; it plays a direct role in translocation across the membrane. A homomeric c-ring of between 10-14 subunits forms the central stalk rotor element with the F(1) delta and epsilon subunits. In Erwinia tasmaniensis (strain DSM 17950 / CFBP 7177 / CIP 109463 / NCPPB 4357 / Et1/99), this protein is ATP synthase subunit c.